A 480-amino-acid polypeptide reads, in one-letter code: Ribulose bisphosphate carboxylase large chain (480 aa).

Residues 1–2 (MS) constitute a propeptide that is removed on maturation. An N-acetylproline modification is found at Pro3. Lys14 carries the N6,N6,N6-trimethyllysine modification. Residues Asn123 and Thr173 each contribute to the substrate site. Catalysis depends on Lys175, which acts as the Proton acceptor. Substrate is bound at residue Lys177. 3 residues coordinate Mg(2+): Lys201, Asp203, and Glu204. Lys201 is subject to N6-carboxylysine. Residue His294 is the Proton acceptor of the active site. Residues Arg295, His327, and Ser379 each coordinate substrate.

The protein belongs to the RuBisCO large chain family. Type I subfamily. In terms of assembly, heterohexadecamer of 8 large chains and 8 small chains; disulfide-linked. The disulfide link is formed within the large subunit homodimers. The cofactor is Mg(2+). In terms of processing, the disulfide bond which can form in the large chain dimeric partners within the hexadecamer appears to be associated with oxidative stress and protein turnover.

It localises to the plastid. The protein localises to the chloroplast. It catalyses the reaction 2 (2R)-3-phosphoglycerate + 2 H(+) = D-ribulose 1,5-bisphosphate + CO2 + H2O. The catalysed reaction is D-ribulose 1,5-bisphosphate + O2 = 2-phosphoglycolate + (2R)-3-phosphoglycerate + 2 H(+). In terms of biological role, ruBisCO catalyzes two reactions: the carboxylation of D-ribulose 1,5-bisphosphate, the primary event in carbon dioxide fixation, as well as the oxidative fragmentation of the pentose substrate in the photorespiration process. Both reactions occur simultaneously and in competition at the same active site. This is Ribulose bisphosphate carboxylase large chain from Mollugo verticillata (Green carpetweed).